The following is a 223-amino-acid chain: Serine/threonine/tyrosine-interacting protein (223 aa).

In terms of domain architecture, Tyrosine-protein phosphatase spans 28–176; that stretch reads EMQEILPGLF…LQEYEAIYLA (149 aa). Residues 76–78 carry the Interaction with FBXW7 motif; the sequence is FQQ. Phosphoserine occurs at positions 184, 193, and 201. The segment at 197–223 is disordered; the sequence is GTTGSLKRTHEEEDDFGTMQVATAQNG.

It belongs to the protein-tyrosine phosphatase family. Non-receptor class subfamily. In terms of assembly, interacts with MAPK1; independently of MAPK1 phosphorylation status. Interacts with CARHSP1/Crhsp-24. Interacts (via FQQ motif) with FBXW7 (via F-box domain); the interaction is direct and prevents FBXW7 interaction with SKP1, a component of the SCF(FBXW7) complex.

Its subcellular location is the nucleus. It is found in the cytoplasm. It localises to the cytosol. Catalytically inactive phosphatase. Acts as a nuclear anchor for MAPK1/MAPK3 (ERK1/ERK2). Modulates cell-fate decisions and cell migration by spatiotemporal regulation of MAPK1/MAPK3 (ERK1/ERK2). By binding to the F-box of FBXW7, prevents the assembly of FBXW7 into the SCF E3 ubiquitin-protein ligase complex, and thereby inhibits degradation of its substrates. Plays a role in spermatogenesis. This chain is Serine/threonine/tyrosine-interacting protein (STYX), found in Pongo abelii (Sumatran orangutan).